The sequence spans 191 residues: Orotate phosphoribosyltransferase (191 aa).

114–122 (EDVVTTGKS) is a 5-phospho-alpha-D-ribose 1-diphosphate binding site. Orotate is bound by residues Thr118 and Arg146.

It belongs to the purine/pyrimidine phosphoribosyltransferase family. PyrE subfamily. As to quaternary structure, homodimer. The cofactor is Mg(2+).

The enzyme catalyses orotidine 5'-phosphate + diphosphate = orotate + 5-phospho-alpha-D-ribose 1-diphosphate. It participates in pyrimidine metabolism; UMP biosynthesis via de novo pathway; UMP from orotate: step 1/2. In terms of biological role, catalyzes the transfer of a ribosyl phosphate group from 5-phosphoribose 1-diphosphate to orotate, leading to the formation of orotidine monophosphate (OMP). In Clostridium botulinum (strain Loch Maree / Type A3), this protein is Orotate phosphoribosyltransferase.